The following is a 284-amino-acid chain: D-tagatose-1,6-bisphosphate aldolase subunit GatY (284 aa).

Asp-82 functions as the Proton donor in the catalytic mechanism. The Zn(2+) site is built by His-83 and His-180. Position 181 (Gly-181) interacts with dihydroxyacetone phosphate. His-208 contributes to the Zn(2+) binding site. Dihydroxyacetone phosphate contacts are provided by residues 209-211 (GAS) and 230-233 (NVAT).

Belongs to the class II fructose-bisphosphate aldolase family. TagBP aldolase GatY subfamily. Forms a complex with GatZ. It depends on Zn(2+) as a cofactor.

The catalysed reaction is D-tagatofuranose 1,6-bisphosphate = D-glyceraldehyde 3-phosphate + dihydroxyacetone phosphate. It participates in carbohydrate metabolism; D-tagatose 6-phosphate degradation; D-glyceraldehyde 3-phosphate and glycerone phosphate from D-tagatose 6-phosphate: step 2/2. Catalytic subunit of the tagatose-1,6-bisphosphate aldolase GatYZ, which catalyzes the reversible aldol condensation of dihydroxyacetone phosphate (DHAP or glycerone-phosphate) with glyceraldehyde 3-phosphate (G3P) to produce tagatose 1,6-bisphosphate (TBP). Requires GatZ subunit for full activity and stability. Is involved in the catabolism of galactitol. The protein is D-tagatose-1,6-bisphosphate aldolase subunit GatY of Salmonella enteritidis PT4 (strain P125109).